Consider the following 430-residue polypeptide: Serine--tRNA ligase (430 aa).

237–239 (TAE) contacts L-serine. 268–270 (RSE) serves as a coordination point for ATP. E291 serves as a coordination point for L-serine. Position 355-358 (355-358 (EISS)) interacts with ATP. Residue S391 coordinates L-serine.

This sequence belongs to the class-II aminoacyl-tRNA synthetase family. Type-1 seryl-tRNA synthetase subfamily. As to quaternary structure, homodimer. The tRNA molecule binds across the dimer.

Its subcellular location is the cytoplasm. The enzyme catalyses tRNA(Ser) + L-serine + ATP = L-seryl-tRNA(Ser) + AMP + diphosphate + H(+). The catalysed reaction is tRNA(Sec) + L-serine + ATP = L-seryl-tRNA(Sec) + AMP + diphosphate + H(+). It functions in the pathway aminoacyl-tRNA biosynthesis; selenocysteinyl-tRNA(Sec) biosynthesis; L-seryl-tRNA(Sec) from L-serine and tRNA(Sec): step 1/1. Its function is as follows. Catalyzes the attachment of serine to tRNA(Ser). Is also able to aminoacylate tRNA(Sec) with serine, to form the misacylated tRNA L-seryl-tRNA(Sec), which will be further converted into selenocysteinyl-tRNA(Sec). This chain is Serine--tRNA ligase, found in Klebsiella pneumoniae (strain 342).